Reading from the N-terminus, the 387-residue chain is 1-deoxy-D-xylulose 5-phosphate reductoisomerase (387 aa).

Residues threonine 10, glycine 11, isoleucine 13, asparagine 38, and asparagine 122 each coordinate NADPH. Lysine 123 provides a ligand contact to 1-deoxy-D-xylulose 5-phosphate. Glutamate 124 serves as a coordination point for NADPH. Residue aspartate 148 participates in Mn(2+) binding. 4 residues coordinate 1-deoxy-D-xylulose 5-phosphate: serine 149, glutamate 150, serine 174, and histidine 197. Glutamate 150 provides a ligand contact to Mn(2+). An NADPH-binding site is contributed by glycine 203. Residues serine 210, asparagine 215, lysine 216, and glutamate 219 each coordinate 1-deoxy-D-xylulose 5-phosphate. Glutamate 219 serves as a coordination point for Mn(2+).

The protein belongs to the DXR family. Mg(2+) serves as cofactor. The cofactor is Mn(2+).

The enzyme catalyses 2-C-methyl-D-erythritol 4-phosphate + NADP(+) = 1-deoxy-D-xylulose 5-phosphate + NADPH + H(+). It functions in the pathway isoprenoid biosynthesis; isopentenyl diphosphate biosynthesis via DXP pathway; isopentenyl diphosphate from 1-deoxy-D-xylulose 5-phosphate: step 1/6. Functionally, catalyzes the NADPH-dependent rearrangement and reduction of 1-deoxy-D-xylulose-5-phosphate (DXP) to 2-C-methyl-D-erythritol 4-phosphate (MEP). This Ehrlichia canis (strain Jake) protein is 1-deoxy-D-xylulose 5-phosphate reductoisomerase.